The sequence spans 1097 residues: Translation initiation factor IF-2 (1097 aa).

The disordered stretch occupies residues 79-458; sequence LEKRVSPQAD…RVIKKKPKKA (380 aa). The span at 97–112 shows a compositional bias: basic and acidic residues; the sequence is AKKEASQEKADAHAKL. The segment covering 157–173 has biased composition (low complexity); that stretch reads AATLAVEEAPIAAAPTE. Composition is skewed to basic and acidic residues over residues 174–190 and 202–221; these read EPMH…KIDS and VEVH…HAEE. The span at 224 to 236 shows a compositional bias: low complexity; it reads TPTTEASSEETSA. Over residues 258 to 267 the composition is skewed to polar residues; it reads RKTQNTTNVS. Basic and acidic residues predominate over residues 268-286; it reads EENKQHEKQPETLKSDKAM. Residues 340-363 are compositionally biased toward polar residues; it reads SDSLQAEISRQQNEISNRFSQSEN. Basic residues predominate over residues 376-385; sequence HKKKRKRKKN. Basic and acidic residues predominate over residues 402–443; sequence PKQEEKPVKKEKPKEREKPAAGKKEQTPGKKPVREDQKERVL. In terms of domain architecture, tr-type G spans 591 to 761; that stretch reads TRPPVVTIMG…LVEAELLELK (171 aa). The segment at 600–607 is G1; sequence GHVDHGKT. Position 600–607 (600–607) interacts with GTP; that stretch reads GHVDHGKT. Residues 625-629 are G2; the sequence is GITQH. The interval 647 to 650 is G3; that stretch reads DTPG. GTP contacts are provided by residues 647–651 and 701–704; these read DTPGH and NKID. Residues 701 to 704 form a G4 region; it reads NKID. The segment at 737–739 is G5; it reads SAK.

This sequence belongs to the TRAFAC class translation factor GTPase superfamily. Classic translation factor GTPase family. IF-2 subfamily.

It is found in the cytoplasm. Functionally, one of the essential components for the initiation of protein synthesis. Protects formylmethionyl-tRNA from spontaneous hydrolysis and promotes its binding to the 30S ribosomal subunits. Also involved in the hydrolysis of GTP during the formation of the 70S ribosomal complex. The protein is Translation initiation factor IF-2 of Chloroherpeton thalassium (strain ATCC 35110 / GB-78).